Reading from the N-terminus, the 66-residue chain is Large ribosomal subunit protein bL35 (66 aa).

The segment covering 18-27 has biased composition (polar residues); it reads ATGKIKSTQS. Positions 18–41 are disordered; sequence ATGKIKSTQSAKRHGMTKRSKRSI. Positions 28–41 are enriched in basic residues; it reads AKRHGMTKRSKRSI.

Belongs to the bacterial ribosomal protein bL35 family.

In Ehrlichia ruminantium (strain Gardel), this protein is Large ribosomal subunit protein bL35.